The primary structure comprises 75 residues: MKKDIHPKYTTVTVTCANCGNSFETRSTKESIKVDICSNCHPFYTGKQVLVDTAGRVERFKKRFAKKNASSSASE.

This sequence belongs to the bacterial ribosomal protein bL31 family. Type A subfamily. In terms of assembly, part of the 50S ribosomal subunit.

Its function is as follows. Binds the 23S rRNA. This chain is Large ribosomal subunit protein bL31, found in Chlorobium phaeobacteroides (strain BS1).